The primary structure comprises 156 residues: Small ribosomal subunit protein uS7 (156 aa).

It belongs to the universal ribosomal protein uS7 family. As to quaternary structure, part of the 30S ribosomal subunit. Contacts proteins S9 and S11.

Its function is as follows. One of the primary rRNA binding proteins, it binds directly to 16S rRNA where it nucleates assembly of the head domain of the 30S subunit. Is located at the subunit interface close to the decoding center, probably blocks exit of the E-site tRNA. In Campylobacter fetus subsp. fetus (strain 82-40), this protein is Small ribosomal subunit protein uS7.